The primary structure comprises 139 residues: Transcription antitermination protein NusB (139 aa).

The protein belongs to the NusB family.

In terms of biological role, involved in transcription antitermination. Required for transcription of ribosomal RNA (rRNA) genes. Binds specifically to the boxA antiterminator sequence of the ribosomal RNA (rrn) operons. This chain is Transcription antitermination protein NusB, found in Rubrobacter xylanophilus (strain DSM 9941 / JCM 11954 / NBRC 16129 / PRD-1).